The following is a 1103-amino-acid chain: Ubiquitin carboxyl-terminal hydrolase 7 (1103 aa).

Over residues 1-11 the composition is skewed to low complexity; that stretch reads MNHQQQQQQQQ. Disordered stretches follow at residues 1–41 and 46–65; these read MNHQ…TQNP and NVTL…DDTS. The segment at 1–209 is interaction with TSPYL5; it reads MNHQQQQQQQ…APHGVAWDSK (209 aa). Ser-19 carries the post-translational modification Phosphoserine. Acidic residues predominate over residues 20-32; the sequence is EPEDMEMEAGDTD. Ser-50 and Ser-54 each carry phosphoserine. Positions 54–209 are interaction with p53/TP53 and MDM2; sequence SNAEEDMEDD…APHGVAWDSK (156 aa). Residues 69–196 form the MATH domain; sequence EATFQFTVER…DDKVTFEVFV (128 aa). The necessary for nuclear localization stretch occupies residues 71 to 206; that stretch reads TFQFTVERFS…QADAPHGVAW (136 aa). Residues 215–522 enclose the USP domain; it reads VGLKNQGATC…NAYMLVYIRE (308 aa). Residue Cys-224 is the Nucleophile of the active site. His-465 serves as the catalytic Proton acceptor. Lys-870 carries the N6-acetyllysine; alternate modification. Lys-870 participates in a covalent cross-link: Glycyl lysine isopeptide (Lys-Gly) (interchain with G-Cter in SUMO2); alternate. Residue Lys-870 forms a Glycyl lysine isopeptide (Lys-Gly) (interchain with G-Cter in ubiquitin); alternate linkage. Lys-883 participates in a covalent cross-link: Glycyl lysine isopeptide (Lys-Gly) (interchain with G-Cter in SUMO2). Ser-964 carries the post-translational modification Phosphoserine. N6-acetyllysine occurs at positions 1085 and 1097.

Belongs to the peptidase C19 family. In terms of assembly, monomer. Homodimer. Part of a complex with DAXX, MDM2, RASSF1 and USP7. Part of a complex with DAXX, MDM2 and USP7. Interacts with MDM2; the interaction is independent of p53/TP53. Interacts with DAXX; the interaction is direct and independent of MDM2 and p53/TP53. Component of a complex composed of KMT2E, OGT and USP7; the complex stabilizes KMT2E, preventing KMT2E ubiquitination and proteasomal-mediated degradation. Interacts (via MATH domain) with KMT2E. Interacts with OGT. Interacts with FOXO4; the interaction is enhanced in presence of hydrogen peroxide and occurs independently of p53/TP53. Interacts with p53/TP53; the interaction is enhanced in response to DNA damage; the interaction is impaired by TSPYL5. Interacts with PTEN; the interaction is direct. Interacts with ATXN1 and the strength of interaction is influenced by the length of the poly-Gln region in ATXN1. A weaker interaction seen with mutants having longer poly-Gln regions. Interacts with KIAA1530/UVSSA. Interacts with MEX3C and antagonizes its ability to degrade mRNA. Interacts with DNMT1 and UHRF1. Interacts with FOXP3. Interacts (via MATH domain) with RNF220. Associated component of the Polycomb group (PcG) multiprotein PRC1-like complex. Interacts with EPOP. Interacts with OTUD4 and USP9X; the interaction is direct. Interacts with CRY2. Interacts with REST. Interacts with ERCC6. Part of a complex consisting of USP7, MAGEL2 and TRIM27; directly interacts with MAGEL2; directly interacts with TRIM27. In terms of processing, polyneddylated. Not sumoylated. Post-translationally, polyubiquitinated. Ubiquitinated at Lys-870. As to expression, widely expressed. High expression is detected in brain, bone marrow, thymus and testis.

The protein localises to the nucleus. The protein resides in the cytoplasm. It is found in the PML body. It localises to the chromosome. The catalysed reaction is Thiol-dependent hydrolysis of ester, thioester, amide, peptide and isopeptide bonds formed by the C-terminal Gly of ubiquitin (a 76-residue protein attached to proteins as an intracellular targeting signal).. Functionally, hydrolase that deubiquitinates target proteins such as ARMC5, FOXO4, DEPTOR, KAT5, p53/TP53, MDM2, ERCC6, DNMT1, UHRF1, PTEN, KMT2E/MLL5 and DAXX. Together with DAXX, prevents MDM2 self-ubiquitination and enhances the E3 ligase activity of MDM2 towards p53/TP53, thereby promoting p53/TP53 ubiquitination and proteasomal degradation. Deubiquitinates p53/TP53, preventing degradation of p53/TP53, and enhances p53/TP53-dependent transcription regulation, cell growth repression and apoptosis. Deubiquitinates p53/TP53 and MDM2 and strongly stabilizes p53/TP53 even in the presence of excess MDM2, and also induces p53/TP53-dependent cell growth repression and apoptosis. Deubiquitination of FOXO4 in presence of hydrogen peroxide is not dependent on p53/TP53 and inhibits FOXO4-induced transcriptional activity. In association with DAXX, is involved in the deubiquitination and translocation of PTEN from the nucleus to the cytoplasm, both processes that are counteracted by PML. Deubiquitinates KMT2E preventing KMT2E proteasomal-mediated degradation. Involved in cell proliferation during early embryonic development. Involved in transcription-coupled nucleotide excision repair (TC-NER) in response to UV damage: recruited to DNA damage sites following interaction with KIAA1530/UVSSA and promotes deubiquitination of ERCC6, preventing UV-induced degradation of ERCC6. Involved in maintenance of DNA methylation via its interaction with UHRF1 and DNMT1: acts by mediating deubiquitination of UHRF1 and DNMT1, preventing their degradation and promoting DNA methylation by DNMT1. Deubiquitinates alkylation repair enzyme ALKBH3. OTUD4 recruits USP7 and USP9X to stabilize ALKBH3, thereby promoting the repair of alkylated DNA lesions. Acts as a chromatin regulator via its association with the Polycomb group (PcG) multiprotein PRC1-like complex; may act by deubiquitinating components of the PRC1-like complex. Able to mediate deubiquitination of histone H2B; it is however unsure whether this activity takes place in vivo. Exhibits a preference towards 'Lys-48'-linked ubiquitin chains. Increases regulatory T-cells (Treg) suppressive capacity by deubiquitinating and stabilizing the transcription factor FOXP3 which is crucial for Treg cell function. Plays a role in the maintenance of the circadian clock periodicity via deubiquitination and stabilization of the CRY1 and CRY2 proteins. Deubiquitinates REST, thereby stabilizing REST and promoting the maintenance of neural progenitor cells. Deubiquitinates SIRT7, inhibiting SIRT7 histone deacetylase activity and regulating gluconeogenesis. Involved in the regulation of WASH-dependent actin polymerization at the surface of endosomes and the regulation of endosomal protein recycling. It maintains optimal WASH complex activity and precise F-actin levels via deubiquitination of TRIM27 and WASHC1. Mediates the deubiquitination of phosphorylated DEPTOR, promoting its stability and leading to decreased mTORC1 signaling. In Mus musculus (Mouse), this protein is Ubiquitin carboxyl-terminal hydrolase 7 (Usp7).